The primary structure comprises 315 residues: Calumenin-B (315 aa).

An N-terminal signal peptide occupies residues 1–19 (MEQWPLLFVVALCILQSSS). The span at 22–39 (MEKKDRVHHDAPLSNKDH) shows a compositional bias: basic and acidic residues. The tract at residues 22 to 42 (MEKKDRVHHDAPLSNKDHDDE) is disordered. EF-hand domains follow at residues 68–103 (ESKE…AQRR), 104–139 (WIYE…YILD), 151–186 (QMMT…EEFD), 188–223 (MKDI…QNGD), 229–264 (WVKT…ADYD), and 265–300 (HAEA…FVGS). 27 residues coordinate Ca(2+): Asp-81, Asp-83, Asp-85, Glu-92, Asp-117, Asn-119, Asp-121, Glu-128, Asp-164, Asp-166, Asp-168, Arg-170, Glu-175, Asp-201, Asn-203, Asp-205, Glu-212, Asp-242, Asn-244, Asp-246, Arg-248, Glu-253, Asp-278, Asp-280, Asp-282, Arg-284, and Glu-289. A Prevents secretion from ER motif is present at residues 312 to 315 (HDEF).

The protein belongs to the CREC family. In terms of assembly, interacts with ggcx.

The protein localises to the endoplasmic reticulum membrane. The protein resides in the golgi apparatus. Its subcellular location is the secreted. It is found in the melanosome. It localises to the sarcoplasmic reticulum lumen. Functionally, involved in regulation of vitamin K-dependent carboxylation of multiple N-terminal glutamate residues. Seems to inhibit gamma-carboxylase ggcx. Binds 7 calcium ions with a low affinity. In Danio rerio (Zebrafish), this protein is Calumenin-B (calub).